An 896-amino-acid chain; its full sequence is Putative mannosylglycerate hydrolase (896 aa).

Positions 12, 14, 125, and 348 each coordinate a divalent metal cation. Residue aspartate 125 is the Nucleophile of the active site.

The protein belongs to the glycosyl hydrolase 38 family. The cofactor is a divalent metal cation.

It catalyses the reaction (2R)-2-O-(6-phospho-alpha-D-mannosyl)-glycerate + H2O = alpha-D-mannose 6-phosphate + (R)-glycerate. May hydrolyze 6-phospho-mannosyl-D-glycerate to mannose-6-phosphate and glycerate. This Halalkalibacterium halodurans (strain ATCC BAA-125 / DSM 18197 / FERM 7344 / JCM 9153 / C-125) (Bacillus halodurans) protein is Putative mannosylglycerate hydrolase (mngB).